We begin with the raw amino-acid sequence, 969 residues long: MTFALGQRWISDTESDLGLGTVVAMDARTVTLMFAASEENRVYARNDAPVTRVTFNVGDVIDCQEGWSLKVEEVLEDEGLYTYFGTREDTQETAIVLREIFLSNHIRFNKPQDKLYAGQIDRMDNFVLRYRALQNQFEQHKSPMRGLCGMRAGLIPHQLYIAHEVGRRHAPRVLLADEVGLGKTIEAGMIIHQQVLSGRAERILIVVPETLQHQWLVEMMRRFNLHFSIFDEERCIEAFAEAENPFDTQQYVLCSLDFLRKSRKRFEQALEGEWDLLVVDEAHHLEWSQDKPSREYQVVEGLAERTAGVLLLTATPEQLGRESHFARLRLLDPDRFYDYDAFVEEEEQYAPVADAITSLFSGEKLPDEAKNQITELLSEQDVEPLFRIIESDSDEEAKASARQELIDNLMDRHGTGRVLFRNTRAAIKGFPKRNVHLMPMDIPQQYTTSMRVSGMIGGKMTPEARAVKNLYPEEIFQEFEGEDSSWWQFDSRVNWLLEKVKEKRSDKVLVIASRASTALQLEQALREREGIRATVFHEGMSILERDKAAAYFAQEEGGAQVLICSEIGSEGRNFQFANQLVMFDLPFNPDLLEQRIGRLDRIGQKRDIDIHVPYLKDTSQAILARWFDEGLNAFAETCPTGRAVYDKYSDALIEMLASGDVSNLDEVIEESAKMNKELKSQLEQGRDRLLEMHSNGGEKAQQIVEKISSTDGDTNLVTFALSLFDTIGLNQDDKGENALVVTPSEHMMVPSYPGLPYEGATITFDRDTALSREDMHFISWEHPMIQGGIDLLMSEGVGTSAVSLLKNKALPVGTILLELVYAVDAQAPKRSGITRFLPKTPIRMMMDARGNDLSPQVEFEGFNRQLSPVNRHLGSKLVTSVQKDIHSLIEAGDALVEQKVEEVRKQAHQDMQQSLNAELERLQALKAVNPNIRDEEIESIEEQIKELTGYINQAQVQLDSLRLIVVSHN.

Residues 164 to 334 enclose the Helicase ATP-binding domain; it reads EVGRRHAPRV…FARLRLLDPD (171 aa). 177–184 provides a ligand contact to ATP; sequence DEVGLGKT. A DEAH box motif is present at residues 280–283; it reads DEAH. The Helicase C-terminal domain occupies 492–646; that stretch reads RVNWLLEKVK…TCPTGRAVYD (155 aa).

This sequence belongs to the SNF2/RAD54 helicase family. RapA subfamily. Interacts with the RNAP. Has a higher affinity for the core RNAP than for the holoenzyme. Its ATPase activity is stimulated by binding to RNAP.

Its function is as follows. Transcription regulator that activates transcription by stimulating RNA polymerase (RNAP) recycling in case of stress conditions such as supercoiled DNA or high salt concentrations. Probably acts by releasing the RNAP, when it is trapped or immobilized on tightly supercoiled DNA. Does not activate transcription on linear DNA. Probably not involved in DNA repair. This Vibrio campbellii (strain ATCC BAA-1116) protein is RNA polymerase-associated protein RapA.